The sequence spans 467 residues: Serine/threonine-protein kinase AFC1 (467 aa).

Residues 115 to 443 (YQILSKMGEG…AREALNHPFF (329 aa)) enclose the Protein kinase domain. Residues 121-129 (MGEGTFGQV) and K144 contribute to the ATP site. Catalysis depends on D240, which acts as the Proton acceptor. A disordered region spans residues 447–467 (REQSIPPFNPNPHPFLYNQKN).

It belongs to the protein kinase superfamily. CMGC Ser/Thr protein kinase family. Lammer subfamily.

It carries out the reaction L-seryl-[protein] + ATP = O-phospho-L-seryl-[protein] + ADP + H(+). It catalyses the reaction L-threonyl-[protein] + ATP = O-phospho-L-threonyl-[protein] + ADP + H(+). The enzyme catalyses L-tyrosyl-[protein] + ATP = O-phospho-L-tyrosyl-[protein] + ADP + H(+). In terms of biological role, activator of yeast transcription factor, STE12. The polypeptide is Serine/threonine-protein kinase AFC1 (AFC1) (Arabidopsis thaliana (Mouse-ear cress)).